Reading from the N-terminus, the 313-residue chain is tRNA dimethylallyltransferase 2 (313 aa).

16-23 (GPTASGKT) provides a ligand contact to ATP. 18–23 (TASGKT) serves as a coordination point for substrate. 2 interaction with substrate tRNA regions span residues 41 to 44 (DSRQ) and 161 to 165 (QRTIR).

This sequence belongs to the IPP transferase family. Monomer. The cofactor is Mg(2+).

The catalysed reaction is adenosine(37) in tRNA + dimethylallyl diphosphate = N(6)-dimethylallyladenosine(37) in tRNA + diphosphate. Its function is as follows. Catalyzes the transfer of a dimethylallyl group onto the adenine at position 37 in tRNAs that read codons beginning with uridine, leading to the formation of N6-(dimethylallyl)adenosine (i(6)A). This Pelobacter propionicus (strain DSM 2379 / NBRC 103807 / OttBd1) protein is tRNA dimethylallyltransferase 2.